Consider the following 526-residue polypeptide: Reticulocyte-binding protein homolog 5 (526 aa).

An N-terminal signal peptide occupies residues 1 to 24 (MIRIKKKLILTIIYIHLFILNRLS). The segment at 33 to 51 (KNQENNLTLLPIKSTEEEK) is mediates interaction with human BSG. Residues Asn38 and Asn214 are each glycosylated (N-linked (GlcNAc...) asparagine). Intrachain disulfides connect Cys224-Cys317 and Cys345-Cys351. A compositionally biased stretch (acidic residues) spans 259–279 (EIDDKSEETDDETEEVEDSIQ). The interval 259–294 (EIDDKSEETDDETEEVEDSIQDTDSNHTPSNKKKND) is disordered. N-linked (GlcNAc...) asparagine glycosylation occurs at Asn297.

As to quaternary structure, forms a complex composed of RH5, P113 and human BSG/basigin; the complex bridges the merozoite and host erythrocyte membranes. Within the complex, interacts (via C-terminus) with human BSG/basigin isoform 2 (via the extracellular domain); the interaction is independent of BSG glycosylation status. Weakly interacts with P.troglodytes BSG but not with G.gorilla BSG. Also, interacts (via N-terminus) with P113; the interaction tethers RH5 to the merozoite membrane. Component of the PfRH5 adhesion complex composed of 1 copy of CyRPA, RH5 and RIPR; the complex is formed during merozoite invasion of host erythrocytes specifically at the interface between the parasite and host membranes. Within the complex, interacts with CyRPA. CyRPA recruits RIPR to the RH5-P113-BSG complex; the formation of the PfRH5 adhesion complex increases the affinity of RH5 for BSG and probably leads to the release of RH5 from P113 while maintaining the interaction of the PfRH5 adhesion complex with BSG. In terms of processing, cleaved into a 45kDa form during merozoite invasion of host erythrocyte.

The protein resides in the secreted. The protein localises to the cytoplasmic vesicle. Its subcellular location is the secretory vesicle. It localises to the rhoptry lumen. It is found in the host cell membrane. Functionally, essential for the invasion of host erythrocytes by blood stage merozoites. By binding P113 at the surface of the merozoite and human BSG/basigin on the erythrocyte membrane, leads to the establishment of a tight junction between the merozoite and host erythrocyte membranes. In addition, the interaction with BSG results in BSG dimerization which triggers an increase in intracellular Ca(2+) in the erythrocyte. This essential step leads to a rearrangement of the erythrocyte cytoskeleton required for the merozoite invasion. The sequence is that of Reticulocyte-binding protein homolog 5 from Plasmodium falciparum (isolate 3D7).